The following is a 92-amino-acid chain: Non-specific lipid-transfer protein B (92 aa).

Cystine bridges form between C3–C51, C13–C28, C29–C74, and C49–C88.

Belongs to the plant LTP family.

In terms of biological role, plant non-specific lipid-transfer proteins transfer phospholipids as well as galactolipids across membranes. May play a role in wax or cutin deposition in the cell walls of expanding epidermal cells and certain secretory tissues. The protein is Non-specific lipid-transfer protein B of Ricinus communis (Castor bean).